Here is a 1077-residue protein sequence, read N- to C-terminus: FKBP12-associated protein 1 homolog (1077 aa).

Residues 1-173 are disordered; the sequence is METSKNPSDL…MPKNSKEIKK (173 aa). Basic residues predominate over residues 15 to 29; it reads ANVKKNRRRFQKSQK. S33 is subject to Phosphoserine. The segment covering 52-64 has biased composition (basic and acidic residues); it reads EEVKTSLKEDSSK. Over residues 76–87 the composition is skewed to polar residues; that stretch reads PTSSVQLNVSKN. The segment covering 100-116 has biased composition (basic and acidic residues); the sequence is SSKDEELRKHAKGEGKR. Residues 136–149 are compositionally biased toward low complexity; that stretch reads SSNSSQETSSSKGS. The span at 153–173 shows a compositional bias: basic and acidic residues; sequence KSERSREAKSRMPKNSKEIKK. The RING-type; atypical zinc finger occupies 197–247; the sequence is CSVCTDTINPSTSIWSCGTCYHVFHLSCIRKWCKNSIEQRNEDAWRCPYCQ. NF-X1-type zinc fingers lie at residues 290 to 308, 348 to 367, 420 to 441, 485 to 503, 541 to 558, 595 to 614, 708 to 729, and 738 to 760; these read CEHP…PCTA, CGEH…ACFE, CGLH…HCPF, CGHR…TCSE, CGRH…SKAQ, CGNH…RCLE, CKTH…SCKK, and CEHV…PCKA. Residues 835 to 897 form the R3H domain; sequence SDFADEVESL…KRNVMVYNKG (63 aa).

It belongs to the NFX1 family.

It is found in the cytoplasm. The protein localises to the golgi apparatus. Its subcellular location is the nucleus. Functionally, may play a role in transcription regulation. The protein is FKBP12-associated protein 1 homolog (fap1) of Schizosaccharomyces pombe (strain 972 / ATCC 24843) (Fission yeast).